The following is a 471-amino-acid chain: Adenosylhomocysteinase (471 aa).

Residues Thr-60, Asp-135, and Glu-196 each coordinate substrate. 197 to 199 (TTT) is a binding site for NAD(+). 2 residues coordinate substrate: Lys-226 and Asp-230. NAD(+) contacts are provided by residues Asn-231, 260-265 (GYGDVG), Glu-283, Asn-318, 339-341 (IGH), and Asn-387.

The protein belongs to the adenosylhomocysteinase family. It depends on NAD(+) as a cofactor.

The protein resides in the cytoplasm. It carries out the reaction S-adenosyl-L-homocysteine + H2O = L-homocysteine + adenosine. It participates in amino-acid biosynthesis; L-homocysteine biosynthesis; L-homocysteine from S-adenosyl-L-homocysteine: step 1/1. In terms of biological role, may play a key role in the regulation of the intracellular concentration of adenosylhomocysteine. This chain is Adenosylhomocysteinase, found in Chlorobium phaeovibrioides (strain DSM 265 / 1930) (Prosthecochloris vibrioformis (strain DSM 265)).